The sequence spans 163 residues: Transcriptional repressor NrdR (163 aa).

Residues 1–22 (MRCPKCQSLKSSVIDSRQAEDG) are disordered. A zinc finger lies at 3 to 34 (CPKCQSLKSSVIDSRQAEDGNTIRRRRSCDQC). Residues 49-139 (LVVVKKDGTR…VYRSFKDVGE (91 aa)) form the ATP-cone domain.

This sequence belongs to the NrdR family. Requires Zn(2+) as cofactor.

In terms of biological role, negatively regulates transcription of bacterial ribonucleotide reductase nrd genes and operons by binding to NrdR-boxes. The polypeptide is Transcriptional repressor NrdR (Streptococcus suis (strain 98HAH33)).